A 148-amino-acid polypeptide reads, in one-letter code: Snaclec flavocetin-A subunit beta (148 aa).

The first 23 residues, 1–23 (MGQFIFVSFGFLVVATSLSGTEA), serve as a signal peptide directing secretion. Intrachain disulfides connect Cys27–Cys38, Cys55–Cys144, and Cys121–Cys136. The 112-residue stretch at 34–145 (YDEHCYQVFQ…CSSKRYVVCK (112 aa)) folds into the C-type lectin domain.

This sequence belongs to the snaclec family. Tetramer of heterodimers of alpha and beta subunits (alphabeta)(4); disulfide-linked. In terms of tissue distribution, expressed by the venom gland.

It is found in the secreted. Strong platelet aggregation inhibitor. Binds specifically to platelet glycoprotein Ibalpha (GP1BA) with high affinity and inhibits vWF-dependent platelet aggregation. Has also been observed to induce small agglutinates in washed platelets by binding to GPIb. The protein is Snaclec flavocetin-A subunit beta of Protobothrops flavoviridis (Habu).